We begin with the raw amino-acid sequence, 147 residues long: Sulfur acceptor protein CsdE (147 aa).

The Cysteine persulfide intermediate role is filled by Cys61. Position 61 is a cysteine persulfide (Cys61).

Belongs to the SufE family. In terms of assembly, homodimer. Forms a heterodimer with CsdA. Interacts with CsdA and with TcdA/CsdL.

Stimulates the cysteine desulfurase activity of CsdA. Contains a cysteine residue (Cys-61) that acts to accept sulfur liberated via the desulfurase activity of CsdA. May be able to transfer sulfur to TcdA/CsdL. Seems to support the function of TcdA in the generation of cyclic threonylcarbamoyladenosine at position 37 (ct(6)A37) in tRNAs that read codons beginning with adenine. Does not appear to participate in Fe/S biogenesis. This chain is Sulfur acceptor protein CsdE (csdE), found in Escherichia coli (strain K12).